The primary structure comprises 1090 residues: Exocyst complex component SEC5B (1090 aa).

The span at 1–12 (MSSSDDLDEDEL) shows a compositional bias: acidic residues. The disordered stretch occupies residues 1–126 (MSSSDDLDED…ARKEDDRAWD (126 aa)). Residues 23–46 (RDVTYQKPPSANSRKPVTNLVQQP) show a composition bias toward polar residues. Residues 52–62 (AAAPPSKGGAK) are compositionally biased toward low complexity. Over residues 96–109 (GGGGDGGGGRGRGG) the composition is skewed to gly residues. The segment covering 110–126 (SGKERGRARKEDDRAWD) has biased composition (basic and acidic residues). Phosphoserine is present on Ser-179. The segment covering 486–502 (VQLSDDTSSMEDNQVQV) has biased composition (polar residues). Disordered stretches follow at residues 486–511 (VQLSDDTSSMEDNQVQVDQPLEESAR), 984–1013 (ETVENNPGGHQRKPTRGSEDAISDDKQSSV), and 1055–1090 (PVAKAAYSRTSTDSPSRNYRESQPMGSPVQARPRRR). The segment covering 999–1010 (RGSEDAISDDKQ) has biased composition (basic and acidic residues). Residues 1062 to 1071 (SRTSTDSPSR) are compositionally biased toward polar residues.

The protein belongs to the SEC5 family. The exocyst complex is composed of SEC3, SEC5, SEC6, SEC8, SEC10, EXO70A1 and EXO84B.

Its function is as follows. Component of the exocyst complex involved in the docking of exocytic vesicles with fusion sites on the plasma membrane during regulated or polarized secretion. Involved in polarized cell growth and organ morphogenesis. During cytokinesis, involved in cell plate initiation, cell plate maturation and formation of new primary cell wall. In Arabidopsis thaliana (Mouse-ear cress), this protein is Exocyst complex component SEC5B (SEC5B).